Reading from the N-terminus, the 140-residue chain is Small ribosomal subunit protein uS19 (140 aa).

It belongs to the universal ribosomal protein uS19 family.

Its function is as follows. Protein S19 forms a complex with S13 that binds strongly to the 16S ribosomal RNA. In Natronomonas pharaonis (strain ATCC 35678 / DSM 2160 / CIP 103997 / JCM 8858 / NBRC 14720 / NCIMB 2260 / Gabara) (Halobacterium pharaonis), this protein is Small ribosomal subunit protein uS19.